The sequence spans 539 residues: Protein ENTREP2 (539 aa).

4 helical membrane passes run 31-51, 65-85, 89-109, and 176-196; these read IVLALGATQMALGCLIVAVSF, SCPFWAGFSVLLSGLIGVVSW, LSLVITFFMLLSAVCVMLNLA, and LLFSVCALNVLSTIVCALATA. Positions 301–481 are disordered; the sequence is VVGQPPASQV…TSKERPRSLV (181 aa). Polar residues predominate over residues 306 to 331; that stretch reads PASQVTSIGQQVAESSSGDPNTSAGF. Positions 347–365 are enriched in low complexity; the sequence is GTATPGSSPSPDGPVGAPA. Positions 395-408 are enriched in polar residues; that stretch reads SRSTSDPTLCTSSM.

This sequence belongs to the ENTREP family.

The protein resides in the membrane. The chain is Protein ENTREP2 from Homo sapiens (Human).